A 380-amino-acid polypeptide reads, in one-letter code: Bifunctional dihydropteroate synthase/dihydropteroate reductase (380 aa).

The tract at residues Met-1–Ala-104 is dihydropteroate reductase. The dihydropteroate synthase stretch occupies residues Gln-105–Asp-380. Residues Pro-119–Lys-371 enclose the Pterin-binding domain. Asn-126 serves as a coordination point for Mg(2+). Residues Asp-202, Asn-221, Asp-289, Lys-325, and Arg-359 to His-361 contribute to the (7,8-dihydropterin-6-yl)methyl diphosphate site.

It in the C-terminal section; belongs to the DHPS family. Requires FAD as cofactor. The cofactor is FMN. It depends on Mg(2+) as a cofactor.

It carries out the reaction (7,8-dihydropterin-6-yl)methyl diphosphate + 4-aminobenzoate = 7,8-dihydropteroate + diphosphate. The enzyme catalyses (6S)-5,6,7,8-tetrahydropteroate + NAD(+) = 7,8-dihydropteroate + NADH + H(+). It functions in the pathway cofactor biosynthesis; tetrahydrofolate biosynthesis; 7,8-dihydrofolate from 2-amino-4-hydroxy-6-hydroxymethyl-7,8-dihydropteridine diphosphate and 4-aminobenzoate: step 1/2. Functionally, bifunctional enzyme that catalyzes the formation of dihydropteroate, the immediate precursor of folic acid and the reduction of dihydropteroate to tetrahydropteroate. The chain is Bifunctional dihydropteroate synthase/dihydropteroate reductase from Helicobacter pylori (strain ATCC 700392 / 26695) (Campylobacter pylori).